Consider the following 292-residue polypeptide: MAAAAAWTGAASPNSLLLSRSPPHAAALAPSPGSSMRRRLLLGVGTPAVAALAAAAPPAVLQDGAVTVLITAGAYSLVRVFDELTERRLIEKSLSRKVVHVLSGVLFMSSWPLFSNSTEARYFAAVVPFLNSMRLLIYGLRLYTDEALELLRGPLYYVLVLLFSVLVFWRESPIGIVSLSMMSGGDGFADIVGRRYGSAKLPFNRKKSWAGSISMFISGFLLSAMMMLYFSSLGYIDVIWEEALGKLALVALAATVVECVPVTEVVDDNISVPLATMLVAFLLFSSNRTIVN.

A chloroplast-targeting transit peptide spans 1–49; it reads MAAAAAWTGAASPNSLLLSRSPPHAAALAPSPGSSMRRRLLLGVGTPAV. Transmembrane regions (helical) follow at residues 98–118, 120–142, 148–168, 216–236, 243–263, and 265–285; these read VVHV…SNST, ARYF…GLRL, LELL…VLVF, FISG…LGYI, ALGK…VPVT, and VVDD…LLFS.

It belongs to the polyprenol kinase family.

The protein localises to the plastid. It is found in the chloroplast membrane. It catalyses the reaction phytol + CTP = phytyl phosphate + CDP + H(+). It functions in the pathway cofactor biosynthesis; tocopherol biosynthesis. Involved in the activation and reutilization of phytol from chlorophyll degradation in plant metabolism, including tocopherol biosynthesis. Catalyzes the conversion of phytol to phytol monophosphate (PMP). The sequence is that of Probable phytol kinase 2, chloroplastic from Glycine max (Soybean).